The following is a 311-amino-acid chain: Ribonuclease HIII (311 aa).

The RNase H type-2 domain occupies 95–311 (MSIVGSDEVG…NTEKALRLLR (217 aa)). A divalent metal cation contacts are provided by Asp101, Glu102, and Asp206.

Belongs to the RNase HII family. RnhC subfamily. Mn(2+) serves as cofactor. It depends on Mg(2+) as a cofactor.

Its subcellular location is the cytoplasm. The enzyme catalyses Endonucleolytic cleavage to 5'-phosphomonoester.. Endonuclease that specifically degrades the RNA of RNA-DNA hybrids. The chain is Ribonuclease HIII from Bacillus cereus (strain ATCC 14579 / DSM 31 / CCUG 7414 / JCM 2152 / NBRC 15305 / NCIMB 9373 / NCTC 2599 / NRRL B-3711).